A 347-amino-acid polypeptide reads, in one-letter code: Heme A synthase (347 aa).

8 helical membrane passes run 14 to 34 (VKIW…IGGI), 96 to 116 (FHRL…LYFM), 129 to 149 (FILI…MVKS), 162 to 182 (LAMH…HFLL), 199 to 219 (VFYI…LVAG), 260 to 280 (FIHE…LLVL), 287 to 307 (MYLL…TFIY), and 311 to 331 (IILA…SIYL). His-262 contacts heme. His-317 lines the heme pocket.

Belongs to the COX15/CtaA family. Type 2 subfamily. As to quaternary structure, interacts with CtaB. Heme b is required as a cofactor.

The protein localises to the cell membrane. It catalyses the reaction Fe(II)-heme o + 2 A + H2O = Fe(II)-heme a + 2 AH2. The protein operates within porphyrin-containing compound metabolism; heme A biosynthesis; heme A from heme O: step 1/1. Functionally, catalyzes the conversion of heme O to heme A by two successive hydroxylations of the methyl group at C8. The first hydroxylation forms heme I, the second hydroxylation results in an unstable dihydroxymethyl group, which spontaneously dehydrates, resulting in the formyl group of heme A. The chain is Heme A synthase from Ehrlichia ruminantium (strain Gardel).